We begin with the raw amino-acid sequence, 501 residues long: Acetylcholine receptor subunit beta (501 aa).

Residues 1–23 (MALGALLLLLGVLGTPLAPGARG) form the signal peptide. Residues 24–244 (SEAEGQLIKK…VIFYLIIRRK (221 aa)) are Extracellular-facing. The cysteines at positions 151 and 165 are disulfide-linked. N164 is a glycosylation site (N-linked (GlcNAc...) asparagine). 3 helical membrane passes run 245–269 (PLFY…VFYL), 277–295 (MGLS…LLLA), and 311–332 (YLMF…VLNL). Residues 333–469 (HHRSPHTHQM…WQFVAMVVDR (137 aa)) lie on the Cytoplasmic side of the membrane. A disordered region spans residues 362-382 (RPKPERDQLPEPHHSLSPRSG). The span at 363 to 375 (PKPERDQLPEPHH) shows a compositional bias: basic and acidic residues. Residue Y390 is modified to Phosphotyrosine; by Tyr-kinases. Residues 470–488 (LFLWTFIVFTSVGTLVIFL) traverse the membrane as a helical segment.

Belongs to the ligand-gated ion channel (TC 1.A.9) family. Acetylcholine receptor (TC 1.A.9.1) subfamily. Beta-1/CHRNB1 sub-subfamily. In terms of assembly, pentamer of two alpha chains, and one each of the beta, delta, and gamma (in immature muscle) or epsilon (in mature muscle) chains. The muscle heteropentamer composed of alpha-1, beta-1, delta, epsilon subunits interacts with the alpha-conotoxin ImII.

It is found in the postsynaptic cell membrane. The protein localises to the cell membrane. It carries out the reaction K(+)(in) = K(+)(out). The catalysed reaction is Na(+)(in) = Na(+)(out). After binding acetylcholine, the AChR responds by an extensive change in conformation that affects all subunits and leads to opening of an ion-conducting channel across the plasma membrane. This is Acetylcholine receptor subunit beta (Chrnb1) from Mus musculus (Mouse).